A 334-amino-acid chain; its full sequence is Glycerol-1-phosphate dehydrogenase [NAD(P)+] (334 aa).

Residues 77 to 81 (GRPID) and 99 to 102 (TTAS) each bind NAD(+). Aspartate 104 is a binding site for substrate. NAD(+) is bound at residue serine 108. A substrate-binding site is contributed by aspartate 147. Zn(2+) is bound by residues aspartate 147 and histidine 225. Histidine 229 provides a ligand contact to substrate. Residue histidine 246 participates in Zn(2+) binding.

The protein belongs to the glycerol-1-phosphate dehydrogenase family. Requires Zn(2+) as cofactor.

Its subcellular location is the cytoplasm. The catalysed reaction is sn-glycerol 1-phosphate + NAD(+) = dihydroxyacetone phosphate + NADH + H(+). The enzyme catalyses sn-glycerol 1-phosphate + NADP(+) = dihydroxyacetone phosphate + NADPH + H(+). It participates in membrane lipid metabolism; glycerophospholipid metabolism. Functionally, catalyzes the NAD(P)H-dependent reduction of dihydroxyacetonephosphate (DHAP or glycerone phosphate) to glycerol 1-phosphate (G1P). The G1P thus generated is used as the glycerophosphate backbone of phospholipids in the cellular membranes of Archaea. The protein is Glycerol-1-phosphate dehydrogenase [NAD(P)+] of Methanococcus maripaludis (strain C5 / ATCC BAA-1333).